Reading from the N-terminus, the 474-residue chain is Lipoprotein lipase (474 aa).

A signal peptide spans 1–27 (MESKALLLVALGVWLQSLTAFRGGVAA). Positions 32-53 (RDFSDIESKFALRTPEDTAEDT) are interaction with GPIHBP1. A disulfide bridge connects residues Cys-54 and Cys-67. An N-linked (GlcNAc...) asparagine glycan is attached at Asn-70. 3'-nitrotyrosine is present on Tyr-121. Ser-159 acts as the Nucleophile in catalysis. Asp-183 (charge relay system) is an active-site residue. Tyr-191 is modified (3'-nitrotyrosine). Ca(2+) is bound by residues Ala-194, Arg-197, Ser-199, and Asp-202. Cys-243 and Cys-266 are joined by a disulfide. The tract at residues 243 to 266 (CNIGEAIRVIAEKGLGDVDQLVKC) is essential for determining substrate specificity. His-268 (charge relay system) is an active-site residue. 2 cysteine pairs are disulfide-bonded: Cys-291/Cys-310 and Cys-302/Cys-305. The region spanning 341-464 (FHYQVKIHFS…KGKDAAVFVK (124 aa)) is the PLAT domain. Tyr-343 is subject to 3'-nitrotyrosine. The N-linked (GlcNAc...) asparagine glycan is linked to Asn-386. The important for interaction with lipoprotein particles stretch occupies residues 417-421 (WSDWW). The important for heparin binding stretch occupies residues 430-434 (KIRVK). Residues 443–467 (IFCAREKVSHLQKGKDAAVFVKCHD) form an interaction with GPIHBP1 region. Cys-445 and Cys-465 are oxidised to a cystine.

The protein belongs to the AB hydrolase superfamily. Lipase family. Homodimer. Interacts with GPIHBP1 with 1:1 stoichiometry. Interacts with APOC2; the interaction activates LPL activity in the presence of lipids. Interaction with heparan sulfate proteoglycans is required to protect LPL against loss of activity. Associates with lipoprotein particles in blood plasma. Interacts with LMF1 and SEL1L; interaction with SEL1L is required to prevent aggregation of newly synthesized LPL in the endoplasmic reticulum (ER), and for normal export of LPL from the ER to the extracellular space. Interacts with SORL1; SORL1 acts as a sorting receptor, promoting LPL localization to endosomes and later to lysosomes, leading to degradation of newly synthesized LPL. In terms of processing, tyrosine nitration after lipopolysaccharide (LPS) challenge down-regulates the lipase activity.

It is found in the cell membrane. It localises to the secreted. The protein localises to the extracellular space. Its subcellular location is the extracellular matrix. It catalyses the reaction a triacylglycerol + H2O = a diacylglycerol + a fatty acid + H(+). It carries out the reaction a 1,2-diacyl-sn-glycero-3-phosphocholine + H2O = a 2-acyl-sn-glycero-3-phosphocholine + a fatty acid + H(+). The enzyme catalyses 1,2,3-tri-(9Z-octadecenoyl)-glycerol + H2O = di-(9Z)-octadecenoylglycerol + (9Z)-octadecenoate + H(+). The catalysed reaction is 1,2-di-(9Z-octadecenoyl)-sn-glycero-3-phosphocholine + H2O = (9Z-octadecenoyl)-sn-glycero-3-phosphocholine + (9Z)-octadecenoate + H(+). It catalyses the reaction 1,2,3-tributanoylglycerol + H2O = dibutanoylglycerol + butanoate + H(+). It carries out the reaction 1,2-dihexadecanoyl-sn-glycero-3-phosphocholine + H2O = hexadecanoyl-sn-glycero-3-phosphocholine + hexadecanoate + H(+). The apolipoprotein APOC2 acts as a coactivator of LPL activity. Ca(2+) binding promotes protein stability and formation of the active homodimer. Interaction with GPIHBP1 protects LPL against inactivation by ANGPTL4. Its function is as follows. Key enzyme in triglyceride metabolism. Catalyzes the hydrolysis of triglycerides from circulating chylomicrons and very low density lipoproteins (VLDL), and thereby plays an important role in lipid clearance from the blood stream, lipid utilization and storage. Although it has both phospholipase and triglyceride lipase activities it is primarily a triglyceride lipase with low but detectable phospholipase activity. Mediates margination of triglyceride-rich lipoprotein particles in capillaries. Recruited to its site of action on the luminal surface of vascular endothelium by binding to GPIHBP1 and cell surface heparan sulfate proteoglycans. This is Lipoprotein lipase (Lpl) from Rattus norvegicus (Rat).